The following is a 206-amino-acid chain: MSSQYSNVENLSPQTIRQVMKELQDMETTPPEGIKVLINESDVTDIQALIDGPAGTPYAVGIFRVKLTLSKDFPQTPPKAYFLTKIFHPNVAANGEICVNTLKKDWKPDLGIKHILLTIKCLLIVPNPESALNEEAGKMLLERYDDYSQRARMMTEIHAQPVKCGVSDAKDDDGPSNKKHAGLDKKLQDKKKEKLLKEKKRMLKRL.

The UBC core domain occupies 14–160; the sequence is QTIRQVMKEL…ARMMTEIHAQ (147 aa). Cys-98 acts as the Glycyl thioester intermediate in catalysis. A disordered region spans residues 165–191; it reads GVSDAKDDDGPSNKKHAGLDKKLQDKK. Basic and acidic residues predominate over residues 168–191; the sequence is DAKDDDGPSNKKHAGLDKKLQDKK.

This sequence belongs to the ubiquitin-conjugating enzyme family.

The enzyme catalyses S-ubiquitinyl-[E1 ubiquitin-activating enzyme]-L-cysteine + [E2 ubiquitin-conjugating enzyme]-L-cysteine = [E1 ubiquitin-activating enzyme]-L-cysteine + S-ubiquitinyl-[E2 ubiquitin-conjugating enzyme]-L-cysteine.. Its pathway is protein modification; protein ubiquitination. In terms of biological role, catalyzes the covalent attachment of ubiquitin to other proteins. Acts as an essential factor of the anaphase promoting complex/cyclosome (APC/C), a cell cycle-regulated ubiquitin ligase that controls progression through mitosis. Acts by specifically elongating polyubiquitin chains initiated by the E2 enzyme vih/UbcH10 on APC/C substrates, enhancing the degradation of APC/C substrates by the proteasome and promoting mitotic exit. The sequence is that of Ubiquitin-conjugating enzyme E2 S from Drosophila mojavensis (Fruit fly).